The chain runs to 185 residues: MINEILKDAEDRMSKAVASVESAFKKIRTGRAHPSILDSVKVNYYGSETPLSQVANITVEDARTLGVSPWENNLVPEIEKAIMKSDLGLNPATNGNLIRIPMPALTEETRKNYFKQAKNEAENGRIAIRNIRRDANGSLKDLVKEKEISEDDDRRGQDQVQKVTDKYVAQIEERLAAKEKDLMEI.

The protein belongs to the RRF family.

The protein localises to the cytoplasm. Responsible for the release of ribosomes from messenger RNA at the termination of protein biosynthesis. May increase the efficiency of translation by recycling ribosomes from one round of translation to another. The sequence is that of Ribosome-recycling factor from Marinomonas sp. (strain MWYL1).